The primary structure comprises 209 residues: Imidazole glycerol phosphate synthase subunit HisH (209 aa).

The 207-residue stretch at 3–209 folds into the Glutamine amidotransferase type-1 domain; the sequence is KIAIIDYGMG…SILKNFGEMK (207 aa). Cys81 (nucleophile) is an active-site residue. Active-site residues include His190 and Glu192.

Heterodimer of HisH and HisF.

The protein localises to the cytoplasm. It catalyses the reaction 5-[(5-phospho-1-deoxy-D-ribulos-1-ylimino)methylamino]-1-(5-phospho-beta-D-ribosyl)imidazole-4-carboxamide + L-glutamine = D-erythro-1-(imidazol-4-yl)glycerol 3-phosphate + 5-amino-1-(5-phospho-beta-D-ribosyl)imidazole-4-carboxamide + L-glutamate + H(+). It carries out the reaction L-glutamine + H2O = L-glutamate + NH4(+). Its pathway is amino-acid biosynthesis; L-histidine biosynthesis; L-histidine from 5-phospho-alpha-D-ribose 1-diphosphate: step 5/9. Its function is as follows. IGPS catalyzes the conversion of PRFAR and glutamine to IGP, AICAR and glutamate. The HisH subunit catalyzes the hydrolysis of glutamine to glutamate and ammonia as part of the synthesis of IGP and AICAR. The resulting ammonia molecule is channeled to the active site of HisF. This Geobacter sulfurreducens (strain ATCC 51573 / DSM 12127 / PCA) protein is Imidazole glycerol phosphate synthase subunit HisH.